Consider the following 218-residue polypeptide: MTVALGFRDLGLIDYETAWHAMQRFTDGRGREAADEVWLVQHPPVFTQGQSGKAEHLLLPGNIPVVQVDRGGQVTYHGPGQLVAYLMLDVRRLGFGVRDLVTRIENTLIALLADYGVKAAAKADAPGVYVDGAKIASLGLRIRNGCSFHGLALNVDMDLEPFRRINPCGYAGLAMTQLSDQAGQIEFSEVSARLRAQLVKHLDYAEQATLTGGINHYD.

A BPL/LPL catalytic domain is found at 31-206 (REAADEVWLV…QLVKHLDYAE (176 aa)). Substrate is bound by residues 70–77 (RGGQVTYH), 137–139 (SLG), and 150–152 (GLA). Cys-168 serves as the catalytic Acyl-thioester intermediate.

The protein belongs to the LipB family.

It localises to the cytoplasm. It carries out the reaction octanoyl-[ACP] + L-lysyl-[protein] = N(6)-octanoyl-L-lysyl-[protein] + holo-[ACP] + H(+). The protein operates within protein modification; protein lipoylation via endogenous pathway; protein N(6)-(lipoyl)lysine from octanoyl-[acyl-carrier-protein]: step 1/2. Catalyzes the transfer of endogenously produced octanoic acid from octanoyl-acyl-carrier-protein onto the lipoyl domains of lipoate-dependent enzymes. Lipoyl-ACP can also act as a substrate although octanoyl-ACP is likely to be the physiological substrate. This Pseudomonas savastanoi pv. phaseolicola (strain 1448A / Race 6) (Pseudomonas syringae pv. phaseolicola (strain 1448A / Race 6)) protein is Octanoyltransferase.